We begin with the raw amino-acid sequence, 626 residues long: UvrABC system protein C (626 aa).

In terms of domain architecture, GIY-YIG spans 26–105 (QEPGVYFMGD…IKQHQPHFNV (80 aa)). Residues 215 to 250 (QELHQLLTQQMEKAAADLKFEQAALIRDQINSLGKL) enclose the UVR domain.

It belongs to the UvrC family. Interacts with UvrB in an incision complex.

The protein resides in the cytoplasm. Its function is as follows. The UvrABC repair system catalyzes the recognition and processing of DNA lesions. UvrC both incises the 5' and 3' sides of the lesion. The N-terminal half is responsible for the 3' incision and the C-terminal half is responsible for the 5' incision. The sequence is that of UvrABC system protein C from Synechocystis sp. (strain ATCC 27184 / PCC 6803 / Kazusa).